Consider the following 320-residue polypeptide: Elongation factor Ts (320 aa).

Residues 82-85 (TDFV) are involved in Mg(2+) ion dislocation from EF-Tu.

The protein belongs to the EF-Ts family.

The protein localises to the cytoplasm. In terms of biological role, associates with the EF-Tu.GDP complex and induces the exchange of GDP to GTP. It remains bound to the aminoacyl-tRNA.EF-Tu.GTP complex up to the GTP hydrolysis stage on the ribosome. The protein is Elongation factor Ts of Flavobacterium johnsoniae (strain ATCC 17061 / DSM 2064 / JCM 8514 / BCRC 14874 / CCUG 350202 / NBRC 14942 / NCIMB 11054 / UW101) (Cytophaga johnsonae).